A 192-amino-acid polypeptide reads, in one-letter code: MMNKKAIVLYGGQFNPIHTAHLLVANEVYHQLKPDKFYFLPSYMAPLKTHDDYLDAKYRIKMIQLAIEELGFGEICQIELERKGQSYTYETLKDIVNNEKDADIYFIIGTDQYKQLDKWYKIEKLKQLITFVIVNRDVNYQEVDESMISVNIPRMDISSSLIRNRVKNKQPINILVPRSIHDYIREEGFYEN.

This sequence belongs to the NadD family.

It carries out the reaction nicotinate beta-D-ribonucleotide + ATP + H(+) = deamido-NAD(+) + diphosphate. Its pathway is cofactor biosynthesis; NAD(+) biosynthesis; deamido-NAD(+) from nicotinate D-ribonucleotide: step 1/1. Functionally, catalyzes the reversible adenylation of nicotinate mononucleotide (NaMN) to nicotinic acid adenine dinucleotide (NaAD). This chain is Probable nicotinate-nucleotide adenylyltransferase, found in Staphylococcus haemolyticus (strain JCSC1435).